A 239-amino-acid polypeptide reads, in one-letter code: Ribonuclease 3 (239 aa).

The RNase III domain occupies 18-141 (YLTLEKALGY…LMAGVYLEAG (124 aa)). A Mg(2+)-binding site is contributed by E54. D58 is a catalytic residue. Positions 127 and 130 each coordinate Mg(2+). Residue E130 is part of the active site. Residues 168–237 (DYKTALQELT…AYQALQKLKE (70 aa)) form the DRBM domain.

Belongs to the ribonuclease III family. In terms of assembly, homodimer. It depends on Mg(2+) as a cofactor.

Its subcellular location is the cytoplasm. It catalyses the reaction Endonucleolytic cleavage to 5'-phosphomonoester.. Functionally, digests double-stranded RNA. Involved in the processing of primary rRNA transcript to yield the immediate precursors to the large and small rRNAs (23S and 16S). Processes some mRNAs, and tRNAs when they are encoded in the rRNA operon. Processes pre-crRNA and tracrRNA of type II CRISPR loci if present in the organism. This Helicobacter pylori (strain J99 / ATCC 700824) (Campylobacter pylori J99) protein is Ribonuclease 3.